The sequence spans 329 residues: MKVYYEQDANLEVLKGKTVAIIGYGSQGHAHAQNLRDSGVNVIVGQRPGGPNFELAKEHGFQPLSAAEAAAQADLIMILLPDQYQASVYENDIKPHLTAGKSLVFAHGFNIHFNQIVPPKDVDVFMIAPKGPGHLVRRTYTEGGGVPCLVAIHQDASGQAMEKALAYAMGVGGTRSGVIETTFREETETDLFGEQAVLCGGISALIQAGFETLVEAGYQPEIAYFECLHETKLIVDLIYEGGLAKMRHSISDTAEYGDYVTGRRIVTEETKKEMKAALKDIQEGRFARDFILECKANYPTFTARRRIEAEHPIEEVGARLRSMMPWLKK.

A KARI N-terminal Rossmann domain is found at 1-181 (MKVYYEQDAN…GGTRSGVIET (181 aa)). Residues 24-27 (YGSQ), Arg-47, and 82-85 (DQYQ) contribute to the NADP(+) site. His-107 is a catalytic residue. Gly-133 contributes to the NADP(+) binding site. A KARI C-terminal knotted domain is found at 182 to 327 (TFREETETDL…ARLRSMMPWL (146 aa)). Mg(2+) is bound by residues Asp-190, Glu-194, Glu-226, and Glu-230. Ser-251 lines the substrate pocket.

This sequence belongs to the ketol-acid reductoisomerase family. It depends on Mg(2+) as a cofactor.

It catalyses the reaction (2R)-2,3-dihydroxy-3-methylbutanoate + NADP(+) = (2S)-2-acetolactate + NADPH + H(+). The enzyme catalyses (2R,3R)-2,3-dihydroxy-3-methylpentanoate + NADP(+) = (S)-2-ethyl-2-hydroxy-3-oxobutanoate + NADPH + H(+). The protein operates within amino-acid biosynthesis; L-isoleucine biosynthesis; L-isoleucine from 2-oxobutanoate: step 2/4. It participates in amino-acid biosynthesis; L-valine biosynthesis; L-valine from pyruvate: step 2/4. Functionally, involved in the biosynthesis of branched-chain amino acids (BCAA). Catalyzes an alkyl-migration followed by a ketol-acid reduction of (S)-2-acetolactate (S2AL) to yield (R)-2,3-dihydroxy-isovalerate. In the isomerase reaction, S2AL is rearranged via a Mg-dependent methyl migration to produce 3-hydroxy-3-methyl-2-ketobutyrate (HMKB). In the reductase reaction, this 2-ketoacid undergoes a metal-dependent reduction by NADPH to yield (R)-2,3-dihydroxy-isovalerate. The sequence is that of Ketol-acid reductoisomerase (NADP(+)) from Oleidesulfovibrio alaskensis (strain ATCC BAA-1058 / DSM 17464 / G20) (Desulfovibrio alaskensis).